Reading from the N-terminus, the 885-residue chain is Alanine--tRNA ligase (885 aa).

Positions 564, 568, 676, and 680 each coordinate Zn(2+).

Belongs to the class-II aminoacyl-tRNA synthetase family. The cofactor is Zn(2+).

The protein resides in the cytoplasm. The catalysed reaction is tRNA(Ala) + L-alanine + ATP = L-alanyl-tRNA(Ala) + AMP + diphosphate. Functionally, catalyzes the attachment of alanine to tRNA(Ala) in a two-step reaction: alanine is first activated by ATP to form Ala-AMP and then transferred to the acceptor end of tRNA(Ala). Also edits incorrectly charged Ser-tRNA(Ala) and Gly-tRNA(Ala) via its editing domain. The polypeptide is Alanine--tRNA ligase (Brucella anthropi (strain ATCC 49188 / DSM 6882 / CCUG 24695 / JCM 21032 / LMG 3331 / NBRC 15819 / NCTC 12168 / Alc 37) (Ochrobactrum anthropi)).